Consider the following 352-residue polypeptide: Protein MGF 360-16R (352 aa).

The protein belongs to the asfivirus MGF 360 family.

In terms of biological role, plays a role in virus cell tropism, and may be required for efficient virus replication in macrophages. This is Protein MGF 360-16R from African swine fever virus (isolate Warthog/Namibia/Wart80/1980) (ASFV).